Reading from the N-terminus, the 61-residue chain is Beta-toxin Tce4 (61 aa).

One can recognise an LCN-type CS-alpha/beta domain in the interval lysine 1–cysteine 61. Cystine bridges form between cysteine 11/cysteine 61, cysteine 15/cysteine 37, cysteine 23/cysteine 42, and cysteine 27/cysteine 44. Cysteine 61 is modified (cysteine amide).

This sequence belongs to the long (4 C-C) scorpion toxin superfamily. Sodium channel inhibitor family. Beta subfamily. In terms of tissue distribution, expressed by the venom gland.

It is found in the secreted. Beta toxins bind voltage-independently at site-4 of sodium channels (Nav) and shift the voltage of activation toward more negative potentials thereby affecting sodium channel activation and promoting spontaneous and repetitive firing. The polypeptide is Beta-toxin Tce4 (Tityus cerroazul (Scorpion)).